Consider the following 342-residue polypeptide: Ribosomal RNA small subunit methyltransferase C (342 aa).

It belongs to the methyltransferase superfamily. RsmC family. In terms of assembly, monomer.

The protein resides in the cytoplasm. The enzyme catalyses guanosine(1207) in 16S rRNA + S-adenosyl-L-methionine = N(2)-methylguanosine(1207) in 16S rRNA + S-adenosyl-L-homocysteine + H(+). Its function is as follows. Specifically methylates the guanine in position 1207 of 16S rRNA in the 30S particle. The sequence is that of Ribosomal RNA small subunit methyltransferase C from Salmonella choleraesuis (strain SC-B67).